The following is a 119-amino-acid chain: Large ribosomal subunit protein uL22 (119 aa).

This sequence belongs to the universal ribosomal protein uL22 family. In terms of assembly, part of the 50S ribosomal subunit.

In terms of biological role, this protein binds specifically to 23S rRNA; its binding is stimulated by other ribosomal proteins, e.g. L4, L17, and L20. It is important during the early stages of 50S assembly. It makes multiple contacts with different domains of the 23S rRNA in the assembled 50S subunit and ribosome. Functionally, the globular domain of the protein is located near the polypeptide exit tunnel on the outside of the subunit, while an extended beta-hairpin is found that lines the wall of the exit tunnel in the center of the 70S ribosome. In Microcystis aeruginosa (strain NIES-843 / IAM M-2473), this protein is Large ribosomal subunit protein uL22.